The primary structure comprises 314 residues: NADH-ubiquinone oxidoreductase chain 1 (314 aa).

A run of 8 helical transmembrane segments spans residues 5–25 (IMPLIGSLLLVICVMVGVAFL), 78–98 (FSPVFSLFLSLLIWMCIPYLI), 105–125 (LGVLFFLCCTSLGVYTVMIAG), 152–172 (ALILLSFIFLVGNYNFLSFYF), 176–196 (YVWFIFFCFPLGLVWLASCLA), 227–247 (LIFLAEYSSILFMSMLFVVIF), 251–271 (DIYSFMFFLKLSFISFIFIWV), and 294–314 (LSLNYLFFFVGLKIFFISLLF).

The protein belongs to the complex I subunit 1 family.

Its subcellular location is the mitochondrion inner membrane. It catalyses the reaction a ubiquinone + NADH + 5 H(+)(in) = a ubiquinol + NAD(+) + 4 H(+)(out). Functionally, core subunit of the mitochondrial membrane respiratory chain NADH dehydrogenase (Complex I) that is believed to belong to the minimal assembly required for catalysis. Complex I functions in the transfer of electrons from NADH to the respiratory chain. The immediate electron acceptor for the enzyme is believed to be ubiquinone. The protein is NADH-ubiquinone oxidoreductase chain 1 (mt:ND1) of Anopheles gambiae (African malaria mosquito).